We begin with the raw amino-acid sequence, 444 residues long: Deoxyguanosinetriphosphate triphosphohydrolase-like protein (444 aa).

Positions 1–28 (MTDAVWNERRLGEDKQRRNDHRSPYQRD) are disordered. An HD domain is found at 59 to 250 (RLTHSLEVSQ…MELADDIAYA (192 aa)).

Belongs to the dGTPase family. Type 2 subfamily.

The sequence is that of Deoxyguanosinetriphosphate triphosphohydrolase-like protein from Shewanella pealeana (strain ATCC 700345 / ANG-SQ1).